A 369-amino-acid polypeptide reads, in one-letter code: tRNA/tmRNA (uracil-C(5))-methyltransferase (369 aa).

5 residues coordinate S-adenosyl-L-methionine: Q190, Y218, N223, E239, and D301. Catalysis depends on C326, which acts as the Nucleophile. Residue E360 is the Proton acceptor of the active site.

It belongs to the class I-like SAM-binding methyltransferase superfamily. RNA M5U methyltransferase family. TrmA subfamily.

It carries out the reaction uridine(54) in tRNA + S-adenosyl-L-methionine = 5-methyluridine(54) in tRNA + S-adenosyl-L-homocysteine + H(+). The enzyme catalyses uridine(341) in tmRNA + S-adenosyl-L-methionine = 5-methyluridine(341) in tmRNA + S-adenosyl-L-homocysteine + H(+). Its function is as follows. Dual-specificity methyltransferase that catalyzes the formation of 5-methyluridine at position 54 (m5U54) in all tRNAs, and that of position 341 (m5U341) in tmRNA (transfer-mRNA). This Vibrio vulnificus (strain CMCP6) protein is tRNA/tmRNA (uracil-C(5))-methyltransferase.